Consider the following 90-residue polypeptide: Small ribosomal subunit protein uS15 (90 aa).

This sequence belongs to the universal ribosomal protein uS15 family. As to quaternary structure, part of the 30S ribosomal subunit. Forms a bridge to the 50S subunit in the 70S ribosome, contacting the 23S rRNA.

Its function is as follows. One of the primary rRNA binding proteins, it binds directly to 16S rRNA where it helps nucleate assembly of the platform of the 30S subunit by binding and bridging several RNA helices of the 16S rRNA. In terms of biological role, forms an intersubunit bridge (bridge B4) with the 23S rRNA of the 50S subunit in the ribosome. This Helicobacter hepaticus (strain ATCC 51449 / 3B1) protein is Small ribosomal subunit protein uS15.